Consider the following 137-residue polypeptide: Ribosome-binding factor A (137 aa).

This sequence belongs to the RbfA family. Monomer. Binds 30S ribosomal subunits, but not 50S ribosomal subunits or 70S ribosomes.

The protein localises to the cytoplasm. In terms of biological role, one of several proteins that assist in the late maturation steps of the functional core of the 30S ribosomal subunit. Associates with free 30S ribosomal subunits (but not with 30S subunits that are part of 70S ribosomes or polysomes). Required for efficient processing of 16S rRNA. May interact with the 5'-terminal helix region of 16S rRNA. In Synechococcus sp. (strain ATCC 27144 / PCC 6301 / SAUG 1402/1) (Anacystis nidulans), this protein is Ribosome-binding factor A.